The following is a 316-amino-acid chain: GMP reductase (316 aa).

The active-site Thioimidate intermediate is the Cys175. 202-225 serves as a coordination point for NADP(+); sequence VIADGGIVEHGDIAKALVCGATMV.

The protein belongs to the IMPDH/GMPR family. GuaC type 2 subfamily.

The catalysed reaction is IMP + NH4(+) + NADP(+) = GMP + NADPH + 2 H(+). Catalyzes the irreversible NADPH-dependent deamination of GMP to IMP. It functions in the conversion of nucleobase, nucleoside and nucleotide derivatives of G to A nucleotides, and in maintaining the intracellular balance of A and G nucleotides. This Chromobacterium violaceum (strain ATCC 12472 / DSM 30191 / JCM 1249 / CCUG 213 / NBRC 12614 / NCIMB 9131 / NCTC 9757 / MK) protein is GMP reductase.